A 704-amino-acid chain; its full sequence is Phosphoribosylformylglycinamidine synthase subunit PurL (704 aa).

Residue histidine 32 is part of the active site. Tyrosine 35 provides a ligand contact to ATP. Glutamate 76 is a binding site for Mg(2+). Substrate is bound by residues 77 to 80 (SHNH) and arginine 99. Histidine 78 (proton acceptor) is an active-site residue. Mg(2+) is bound at residue aspartate 100. Glutamine 224 lines the substrate pocket. Aspartate 252 lines the Mg(2+) pocket. A substrate-binding site is contributed by 296–298 (ESQ). Aspartate 471 and glycine 508 together coordinate ATP. Asparagine 509 lines the Mg(2+) pocket. A substrate-binding site is contributed by serine 511.

The protein belongs to the FGAMS family. As to quaternary structure, monomer. Part of the FGAM synthase complex composed of 1 PurL, 1 PurQ and 2 PurS subunits.

The protein resides in the cytoplasm. The enzyme catalyses N(2)-formyl-N(1)-(5-phospho-beta-D-ribosyl)glycinamide + L-glutamine + ATP + H2O = 2-formamido-N(1)-(5-O-phospho-beta-D-ribosyl)acetamidine + L-glutamate + ADP + phosphate + H(+). The protein operates within purine metabolism; IMP biosynthesis via de novo pathway; 5-amino-1-(5-phospho-D-ribosyl)imidazole from N(2)-formyl-N(1)-(5-phospho-D-ribosyl)glycinamide: step 1/2. Functionally, part of the phosphoribosylformylglycinamidine synthase complex involved in the purines biosynthetic pathway. Catalyzes the ATP-dependent conversion of formylglycinamide ribonucleotide (FGAR) and glutamine to yield formylglycinamidine ribonucleotide (FGAM) and glutamate. The FGAM synthase complex is composed of three subunits. PurQ produces an ammonia molecule by converting glutamine to glutamate. PurL transfers the ammonia molecule to FGAR to form FGAM in an ATP-dependent manner. PurS interacts with PurQ and PurL and is thought to assist in the transfer of the ammonia molecule from PurQ to PurL. The polypeptide is Phosphoribosylformylglycinamidine synthase subunit PurL (Pyrococcus furiosus (strain ATCC 43587 / DSM 3638 / JCM 8422 / Vc1)).